The chain runs to 692 residues: Zinc finger protein 180 (692 aa).

A KRAB domain is found at Val-72–Asp-145. Glycyl lysine isopeptide (Lys-Gly) (interchain with G-Cter in SUMO2) cross-links involve residues Lys-138, Lys-159, Lys-168, Lys-191, Lys-198, Lys-226, Lys-304, Lys-313, and Lys-330. 12 consecutive C2H2-type zinc fingers follow at residues Phe-353–His-375, Tyr-381–His-403, Tyr-409–His-431, Tyr-437–His-459, Tyr-465–His-487, Tyr-493–His-515, Phe-521–His-543, Tyr-549–His-571, Tyr-577–His-599, Tyr-605–His-627, Phe-633–His-655, and Phe-661–His-683.

It belongs to the krueppel C2H2-type zinc-finger protein family.

The protein resides in the nucleus. In terms of biological role, may be involved in transcriptional regulation. The chain is Zinc finger protein 180 (ZNF180) from Homo sapiens (Human).